Here is a 358-residue protein sequence, read N- to C-terminus: Replication factor C subunit 5 (358 aa).

Belongs to the activator 1 small subunits family. As to quaternary structure, heteropentamer of subunits rfc1, rfc2, rfc3, rfc4 and rfc5 that forms a complex (RFC) with PCNA in the presence of ATP. Two other complexes exist where rfc1 can be replaced by either ctf18 or elg1 to form the ctf18-RFC or the elg1-RFC complexes respectively.

It is found in the nucleus. In terms of biological role, the elongation of primed DNA templates by DNA polymerase delta and epsilon requires the action of the accessory proteins PCNA and activator 1. The sequence is that of Replication factor C subunit 5 (rfc5) from Schizosaccharomyces pombe (strain 972 / ATCC 24843) (Fission yeast).